The primary structure comprises 356 residues: Histidinol-phosphate aminotransferase (356 aa).

Lysine 214 is subject to N6-(pyridoxal phosphate)lysine.

This sequence belongs to the class-II pyridoxal-phosphate-dependent aminotransferase family. Histidinol-phosphate aminotransferase subfamily. As to quaternary structure, homodimer. It depends on pyridoxal 5'-phosphate as a cofactor.

The catalysed reaction is L-histidinol phosphate + 2-oxoglutarate = 3-(imidazol-4-yl)-2-oxopropyl phosphate + L-glutamate. It functions in the pathway amino-acid biosynthesis; L-histidine biosynthesis; L-histidine from 5-phospho-alpha-D-ribose 1-diphosphate: step 7/9. The protein is Histidinol-phosphate aminotransferase of Escherichia fergusonii (strain ATCC 35469 / DSM 13698 / CCUG 18766 / IAM 14443 / JCM 21226 / LMG 7866 / NBRC 102419 / NCTC 12128 / CDC 0568-73).